Here is a 629-residue protein sequence, read N- to C-terminus: Neuronal acetylcholine receptor subunit alpha-4 (629 aa).

Positions 1-30 (MEIGGSGAPPPLLLLPLLLLLGTGLLPASS) are cleaved as a signal peptide. Topologically, residues 32–249 (IETRAHAEER…IIRRLPLFYT (218 aa)) are extracellular. Asparagine 59 is a glycosylation site (N-linked (GlcNAc...) asparagine). Valine 78 and glutamate 80 together coordinate Ca(2+). 2 N-linked (GlcNAc...) asparagine glycosylation sites follow: asparagine 109 and asparagine 176. Intrachain disulfides connect cysteine 163/cysteine 177 and cysteine 227/cysteine 228. A helical transmembrane segment spans residues 250–270 (INLIIPCLLISCLTVLVFYLP). Cysteine 273 carries the S-palmitoyl cysteine lipid modification. The next 2 membrane-spanning stretches (helical) occupy residues 279–299 (LCISVLLSLTVFLLLITEIIP) and 312–332 (LLFTMIFVTLSIVITVFVLNV). Residues 333-603 (HHRSPRTHTM…KYVAMVIDRI (271 aa)) are Cytoplasmic-facing. Disordered regions lie at residues 420-459 (ETQPTCRSPSHKVPDLKTSEVEKASPCPSPGSCHPPNSSG) and 503-529 (SLTESKPTGSPASLKTRPSQLPVSDQT). Serine 427 is modified (phosphoserine). Residues 431-442 (KVPDLKTSEVEK) are compositionally biased toward basic and acidic residues. Over residues 449–459 (PGSCHPPNSSG) the composition is skewed to low complexity. The span at 504–529 (LTESKPTGSPASLKTRPSQLPVSDQT) shows a compositional bias: polar residues. 2 positions are modified to phosphoserine: serine 540 and serine 543. A helical membrane pass occupies residues 604–624 (FLWMFIIVCLLGTVGLFLPPW).

Belongs to the ligand-gated ion channel (TC 1.A.9) family. Acetylcholine receptor (TC 1.A.9.1) subfamily. Alpha-4/CHRNA4 sub-subfamily. As to quaternary structure, neuronal AChR is composed of two different types of subunits: alpha and beta. CHRNA4 forms heteropentameric neuronal acetylcholine receptors with CHRNB2 and CHRNB4, as well as CHRNA5 and CHRNB3 as accesory subunits. Found in two major stoichiometric forms, LS (low agonist sensitivity): (CHRNA4)3:(CHRNB2)2 and HS (high agonist sensitivity): (CHRNA4)2:(CHRNB2)3, the two stoichiometric forms differ in their unitary conductance, calcium permeability, ACh sensitivity and potentiation by divalent cation. Cells produce predominantly an (CHRNA4)3:(CHRNB2)2 nAChR. The (CHRNA4)2:(CHRNB2)3 expression is selectively up-regulated by nicotine and has lower single channel conductance and calcium permeability. In the striatum, also forms CHRNA4:CHRNA6:CHRNB2 complexes. Also found in the stoichiometric form: (CHRNA4:CHRNB2)2:CHRNB3. Interacts with RIC3; which is required for proper folding and assembly. Interacts with LYPD6.

It is found in the synaptic cell membrane. It localises to the cell membrane. The catalysed reaction is K(+)(in) = K(+)(out). It catalyses the reaction Na(+)(in) = Na(+)(out). The enzyme catalyses Ca(2+)(in) = Ca(2+)(out). Activated by a myriad of ligands such as acetylcholine, cytisine, nicotine, choline and epibatidine. Channel potentiation by calcium is stoichiometry-selective, CHRNA4:CHRNB2 nACh receptor is achieved by calcium association with topographically distinct sites framed by anionic residues within the CHRNA4 subunit and between the CHRNA4 and CHRNB2 subunits. nAChR activity is inhibited by the antagonist alpha-conotoxins BuIA, PnIA, GID and MII, small disulfide-constrained peptides from cone snails. Its function is as follows. Component of neuronal acetylcholine receptors (nAChRs) that function as pentameric, ligand-gated cation channels with high calcium permeability among other activities. nAChRs are excitatory neurotrasnmitter receptors formed by a collection of nAChR subunits known to mediate synaptic transmission in the nervous system and the neuromuscular junction. Each nAchR subunit confers differential attributes to channel properties, including activation, deactivation and desensitization kinetics, pH sensitivity, cation permeability, and binding to allosteric modulators. CHRNA4 forms heteropentameric neuronal acetylcholine receptors with CHRNB2 and CHRNB4, as well as CHRNA5 and CHRNB3 as accesory subunits. Is the most abundant nAChR subtype expressed in the central nervous system. Found in two major stoichiometric forms,(CHRNA4)3:(CHRNB2)2 and (CHRNA4)2:(CHRNB2)3, the two stoichiometric forms differ in their unitary conductance, calcium permeability, ACh sensitivity and potentiation by divalent cation. Involved in the modulation of calcium-dependent signaling pathways, influences the release of neurotransmitters, including dopamine, glutamate and GABA. This chain is Neuronal acetylcholine receptor subunit alpha-4 (Chrna4), found in Mus musculus (Mouse).